Consider the following 670-residue polypeptide: Protein-glutamine gamma-glutamyltransferase 4 (670 aa).

N-linked (GlcNAc...) asparagine glycosylation is found at Asn151 and Asn219. Cys255 is a catalytic residue. The N-linked (GlcNAc...) asparagine glycan is linked to Asn288. Active-site residues include His314 and Asp337. 4 residues coordinate Ca(2+): Asn377, Asp379, Glu429, and Glu434. Asn456 and Asn491 each carry an N-linked (GlcNAc...) asparagine glycan.

This sequence belongs to the transglutaminase superfamily. Transglutaminase family. As to quaternary structure, homodimer. Requires Ca(2+) as cofactor. Expressed in the coagulating gland and in the dorsal part of the prostate. Not expressed in the brain, heart, kidney, liver, lung, muscle, pancreas, spleen, stomach, testis and thymus.

The protein resides in the secreted. The catalysed reaction is L-glutaminyl-[protein] + L-lysyl-[protein] = [protein]-L-lysyl-N(6)-5-L-glutamyl-[protein] + NH4(+). Associated with the mammalian reproductive process. Plays an important role in the formation of the seminal coagulum through the cross-linking of specific proteins present in the seminal plasma. Transglutaminase is also required to stabilize the copulatory plug. This Mus musculus (Mouse) protein is Protein-glutamine gamma-glutamyltransferase 4.